We begin with the raw amino-acid sequence, 447 residues long: Cysteine--tRNA ligase (447 aa).

Cys-28 provides a ligand contact to Zn(2+). The short motif at Pro-30–Asn-40 is the 'HIGH' region element. Residues Cys-211, His-236, and Glu-240 each coordinate Zn(2+). Residues Lys-268–Ser-272 carry the 'KMSKS' region motif. ATP is bound at residue Lys-271.

This sequence belongs to the class-I aminoacyl-tRNA synthetase family. In terms of assembly, monomer. Zn(2+) serves as cofactor.

Its subcellular location is the cytoplasm. It catalyses the reaction tRNA(Cys) + L-cysteine + ATP = L-cysteinyl-tRNA(Cys) + AMP + diphosphate. The polypeptide is Cysteine--tRNA ligase (Streptococcus pneumoniae (strain ATCC BAA-255 / R6)).